The chain runs to 542 residues: Adenine deaminase (542 aa).

This sequence belongs to the metallo-dependent hydrolases superfamily. Adenine deaminase family. The cofactor is Mn(2+).

It carries out the reaction adenine + H2O + H(+) = hypoxanthine + NH4(+). This Methanosphaera stadtmanae (strain ATCC 43021 / DSM 3091 / JCM 11832 / MCB-3) protein is Adenine deaminase.